The primary structure comprises 183 residues: Troponin I, fast skeletal muscle (183 aa).

N-acetylserine is present on Ser2. The segment at 2-48 is involved in binding TNC; the sequence is SDEEKKRRAATARRQHLKSAMLQLAVTEIEKEAAAKEVEKQNYLAEH. The involved in binding TNC and actin stretch occupies residues 97–117; it reads SQKLFDLRGKFKRPPLRRVRM.

Belongs to the troponin I family. As to quaternary structure, binds to actin and tropomyosin. The N-terminus is blocked.

Troponin I is the inhibitory subunit of troponin, the thin filament regulatory complex which confers calcium-sensitivity to striated muscle actomyosin ATPase activity. The chain is Troponin I, fast skeletal muscle (TNNI2) from Gallus gallus (Chicken).